Reading from the N-terminus, the 172-residue chain is MEGYRLLYPMRTYLVVSGHGDEANVMAADWVTVLSFDPFMVGVAIAPKRTTHKLIKKYNEFVISVPSLEMLRDVWIAGTKKGPSKLKDMGITLVPSRKVKVPSIKEALANIECEVYDTKDYGDHTLFVGKVLAYTYKEEAFEGGKPNLKFNFLAHVSWSEFVTFQDKIYRAE.

Belongs to the flavoredoxin family. The cofactor is FMN.

This is an uncharacterized protein from Pyrococcus abyssi (strain GE5 / Orsay).